Here is a 537-residue protein sequence, read N- to C-terminus: Tegument protein BRRF2 (537 aa).

Disordered regions lie at residues 322–466 (PRFL…AEEF) and 486–537 (GLRV…LSVV). Over residues 334–347 (EPQQTCSQLTSRGN) the composition is skewed to polar residues. Residues 420 to 441 (VTGSSQAAPSSSSVTPVASLSG) are compositionally biased toward low complexity. Acidic residues predominate over residues 492-517 (DEDEDGSEDGEFSDLDLSDSDHEGDE).

This sequence belongs to the lymphocryptovirus BRRF2 family.

It is found in the virion tegument. This Homo sapiens (Human) protein is Tegument protein BRRF2.